Reading from the N-terminus, the 410-residue chain is MTGCSPVFTMQQVVGVSHRLVWRTFRGTDLLMTRTLCSPGPSRPGEKRPEAAALGLYHRLPELGRTLSHTIRNQAASTAKAWWDRYEEFVGLNEVREAQGNVTEAEKVFMVARGLVREAREDLEAQQTKLKEVRDRLDRVSREDNQYLELATLEHRMLQEEKRLRIAYLRAEDSEREKFSLFSAAVRESHEKERTRAERTKNWSLIGSVLGALIGVAGSTYVNRVRLQELKALLLEAQKGPVSLQEAIREQASSYSLQQKDLQNLMVDLRGLVHVGQDQGSGSPTGPSSPRGKDIDGLSAAMKEQLNHSRQVYSCLEGLREQLDSLEKTCSQMAGVVRLAKVPAHPGMVEPLDGALPSSLLEHGSTMLALSEMEQRLEAQANRNAISSTLVTCVTFMATLPLLYMLFKTS.

Residues 1–35 (MTGCSPVFTMQQVVGVSHRLVWRTFRGTDLLMTRT) constitute a mitochondrion transit peptide. The Mitochondrial matrix segment spans residues 36-201 (LCSPGPSRPG…KERTRAERTK (166 aa)). The stretch at 116–143 (VREAREDLEAQQTKLKEVRDRLDRVSRE) forms a coiled coil. A helical transmembrane segment spans residues 202–222 (NWSLIGSVLGALIGVAGSTYV). Residues 223 to 385 (NRVRLQELKA…RLEAQANRNA (163 aa)) lie on the Mitochondrial intermembrane side of the membrane. The tract at residues 276–296 (GQDQGSGSPTGPSSPRGKDID) is disordered. The segment covering 280–290 (GSGSPTGPSSP) has biased composition (low complexity). The chain crosses the membrane as a helical span at residues 386–406 (ISSTLVTCVTFMATLPLLYML). Residues 407 to 410 (FKTS) are Mitochondrial matrix-facing.

The mitochondrial potassium channel (mitoK(ATP)) forms a heteromultimer.

Its subcellular location is the mitochondrion inner membrane. It catalyses the reaction K(+)(in) = K(+)(out). With respect to regulation, channel activity inhibited by ATP via ABCB8/MITOSUR subunit. Pore-forming subunit of the mitochondrial ATP-gated potassium channel (mitoK(ATP)). Together with ATP-binding subunit ABCB8/MITOSUR of the mitoK(ATP) channel, mediates ATP-dependent K(+) currents across the mitochondrial inner membrane. An increase in ATP intracellular levels closes the channel, inhibiting K(+) transport, whereas a decrease in ATP levels enhances K(+) uptake in the mitochondrial matrix. May contribute to the homeostatic control of cellular metabolism under stress conditions by regulating the mitochondrial matrix volume. This Rattus norvegicus (Rat) protein is Mitochondrial potassium channel.